The primary structure comprises 145 residues: Basic phospholipase A2 beta-bungarotoxin A2 chain (145 aa).

The signal sequence occupies residues 1 to 17 (MLIFLWCGAVCVSLLGA). The propeptide occupies 18–25 (ANIPPHPL). Cystine bridges form between Cys52–Cys144, Cys54–Cys70, Cys69–Cys125, Cys76–Cys118, Cys86–Cys111, and Cys104–Cys116. Residues Tyr53, Gly55, and Gly57 each contribute to the Ca(2+) site. The active site involves His73. Asp74 contacts Ca(2+). The active site involves Asp119.

It belongs to the phospholipase A2 family. Group I subfamily. D49 sub-subfamily. In terms of assembly, heterodimer; disulfide-linked. The A chains have phospholipase A2 activity and the B chains show homology with the basic protease inhibitors. The A2 chain is found in beta-3 and beta-4 bungarotoxins. Ca(2+) is required as a cofactor. In terms of tissue distribution, expressed by the venom gland.

Its subcellular location is the secreted. The enzyme catalyses a 1,2-diacyl-sn-glycero-3-phosphocholine + H2O = a 1-acyl-sn-glycero-3-phosphocholine + a fatty acid + H(+). In terms of biological role, snake venom phospholipase A2 (PLA2) that inhibits neuromuscular transmission by blocking acetylcholine release from the nerve termini. PLA2 catalyzes the calcium-dependent hydrolysis of the 2-acyl groups in 3-sn-phosphoglycerides. The chain is Basic phospholipase A2 beta-bungarotoxin A2 chain from Bungarus multicinctus (Many-banded krait).